The sequence spans 157 residues: Large ribosomal subunit protein eL21 (157 aa).

The disordered stretch occupies residues 110–132 (QANDQAKAEGNKAGKRVSTKRNP).

The protein belongs to the eukaryotic ribosomal protein eL21 family.

This Tetrahymena thermophila (strain SB210) protein is Large ribosomal subunit protein eL21 (RPL21).